Consider the following 198-residue polypeptide: Probable thymidylate kinase (198 aa).

9 to 16 (GIDGSGKT) provides a ligand contact to ATP.

The protein belongs to the thymidylate kinase family.

The catalysed reaction is dTMP + ATP = dTDP + ADP. In Methanococcus vannielii (strain ATCC 35089 / DSM 1224 / JCM 13029 / OCM 148 / SB), this protein is Probable thymidylate kinase.